The sequence spans 586 residues: Arginine--tRNA ligase (586 aa).

The 'HIGH' region signature appears at 128-138 (ANPTGPLHVGH).

Belongs to the class-I aminoacyl-tRNA synthetase family. Monomer.

It is found in the cytoplasm. It catalyses the reaction tRNA(Arg) + L-arginine + ATP = L-arginyl-tRNA(Arg) + AMP + diphosphate. This chain is Arginine--tRNA ligase, found in Legionella pneumophila (strain Corby).